The primary structure comprises 40 residues: Photosystem II reaction center protein J (40 aa).

A helical transmembrane segment spans residues 8–28 (IPLWIIGTVTGLLVIGLIGIF).

The protein belongs to the PsbJ family. As to quaternary structure, PSII is composed of 1 copy each of membrane proteins PsbA, PsbB, PsbC, PsbD, PsbE, PsbF, PsbH, PsbI, PsbJ, PsbK, PsbL, PsbM, PsbT, PsbX, PsbY, PsbZ, Psb30/Ycf12, at least 3 peripheral proteins of the oxygen-evolving complex and a large number of cofactors. It forms dimeric complexes.

Its subcellular location is the plastid. The protein resides in the chloroplast thylakoid membrane. Functionally, one of the components of the core complex of photosystem II (PSII). PSII is a light-driven water:plastoquinone oxidoreductase that uses light energy to abstract electrons from H(2)O, generating O(2) and a proton gradient subsequently used for ATP formation. It consists of a core antenna complex that captures photons, and an electron transfer chain that converts photonic excitation into a charge separation. The polypeptide is Photosystem II reaction center protein J (Ipomoea purpurea (Common morning glory)).